A 533-amino-acid chain; its full sequence is uncharacterized protein (533 aa).

The next 4 helical transmembrane spans lie at Met-1–Ile-21, Leu-135–Leu-155, Ala-193–Ala-213, and Leu-472–Gly-492.

The protein localises to the cell membrane. This is an uncharacterized protein from Mycobacterium bovis (strain ATCC BAA-935 / AF2122/97).